The following is a 156-amino-acid chain: Mitochondrial intermembrane space cysteine motif-containing protein MIX17 (156 aa).

A mitochondrion-targeting transit peptide spans 1–21; the sequence is MARSRGSSRPISRSRPTQTRS. The span at 1–21 shows a compositional bias: low complexity; it reads MARSRGSSRPISRSRPTQTRS. 2 disordered regions span residues 1–50 and 78–110; these read MARS…GAQT and AGIT…QTQT. Residues 84–110 show a composition bias toward polar residues; that stretch reads FSGSGSDSAPVEQQQQNMANTSGQTQT. The 42-residue stretch at 115-156 folds into the CHCH domain; the sequence is GRTCEIDARNFTRCLDENNGNFQICDYYLQQLKACQEAARQY. A Cx9C motif motif is present at residues 118–128; it reads CEIDARNFTRC. Cystine bridges form between cysteine 118–cysteine 149 and cysteine 128–cysteine 139.

The protein resides in the mitochondrion intermembrane space. This chain is Mitochondrial intermembrane space cysteine motif-containing protein MIX17 (MIX17), found in Saccharomyces cerevisiae (strain ATCC 204508 / S288c) (Baker's yeast).